A 975-amino-acid polypeptide reads, in one-letter code: Ubiquitin C-terminal hydrolase 15 (975 aa).

Residues C88, C91, C99, C102, C108, C112, H121, and C125 each coordinate Zn(2+). An MYND-type zinc finger spans residues 88–125 (CATCHGPAKTRCSRCKSVRYCSGKCQIIHWRQGHKQTC). The segment at 301–378 (EGPYASAAES…STKTAVSTNS (78 aa)) is disordered. Polar residues predominate over residues 309–322 (ESLQRSNSSGNVTG). Residues 354-369 (YDGHEKNPHNKNEQRS) are compositionally biased toward basic and acidic residues. One can recognise a USP domain in the interval 441–747 (RGLFNCGNSC…GAYMLFYMRS (307 aa)). The active-site Nucleophile is C450. H706 serves as the catalytic Proton acceptor. Positions 764–783 (PTCSKRHSSKSSKGSKQDLN) are disordered.

This sequence belongs to the peptidase C19 family. As to expression, highly expressed in young panicles. Expressed in roots, leaf blades, leaf sheaths and stems. Expressed at low levels in brown grains.

Its subcellular location is the cytoplasm. The protein localises to the nucleus. The enzyme catalyses Thiol-dependent hydrolysis of ester, thioester, amide, peptide and isopeptide bonds formed by the C-terminal Gly of ubiquitin (a 76-residue protein attached to proteins as an intracellular targeting signal).. In terms of biological role, recognizes and hydrolyzes the peptide bond at the C-terminal Gly of ubiquitin. Involved in the processing of poly-ubiquitin precursors as well as that of ubiquitinated proteins. Involved in the regulation of grain size. Acts as positive regulator of grain width and size by influencing cell proliferation. Functions partially antagonistically with GW2 in the regulation of grain width. Possesses deubiquitinating enzyme activity in vitro. This is Ubiquitin C-terminal hydrolase 15 from Oryza sativa subsp. japonica (Rice).